The sequence spans 396 residues: Probable circularly permuted 1,3-beta-glucanase YJL171C (396 aa).

Positions 1–19 are cleaved as a signal peptide; that stretch reads MLQSIVLSVCMFMLHTVAA. Asparagine 51, asparagine 99, asparagine 122, asparagine 146, asparagine 174, asparagine 219, and asparagine 249 each carry an N-linked (GlcNAc...) asparagine glycan. Residues 259–264 carry the ExDxxE motif motif; the sequence is EYDIFE. N-linked (GlcNAc...) asparagine glycosylation is found at asparagine 267, asparagine 300, asparagine 328, and asparagine 346. A lipid anchor (GPI-anchor amidated asparagine) is attached at asparagine 368. The propeptide at 369–396 is removed in mature form; it reads GVALTKMQNGVWYYILAIFTAFTQVVLI.

The protein belongs to the PGA52 family. Extensively N-glycosylated.

The protein resides in the cell membrane. It carries out the reaction Hydrolysis of (1-&gt;3)-beta-D-glucosidic linkages in (1-&gt;3)-beta-D-glucans.. Functionally, probable circularly permuted 1,3-beta-glucanase involved in cell wall modification through beta-1,3-glucan network alterations such as increased branching or remodeling. The protein is Probable circularly permuted 1,3-beta-glucanase YJL171C (TOH1) of Saccharomyces cerevisiae (strain ATCC 204508 / S288c) (Baker's yeast).